The sequence spans 293 residues: Energy-coupling factor transporter ATP-binding protein EcfA2 (293 aa).

In terms of domain architecture, ABC transporter spans 3–246 (ITFQKVEHRY…ADELEKIGVD (244 aa)). Residue 40 to 47 (GHTGSGKS) coordinates ATP.

The protein belongs to the ABC transporter superfamily. Energy-coupling factor EcfA family. As to quaternary structure, forms a stable energy-coupling factor (ECF) transporter complex composed of 2 membrane-embedded substrate-binding proteins (S component), 2 ATP-binding proteins (A component) and 2 transmembrane proteins (T component).

The protein resides in the cell membrane. ATP-binding (A) component of a common energy-coupling factor (ECF) ABC-transporter complex. Unlike classic ABC transporters this ECF transporter provides the energy necessary to transport a number of different substrates. The chain is Energy-coupling factor transporter ATP-binding protein EcfA2 from Bacillus cereus (strain ATCC 14579 / DSM 31 / CCUG 7414 / JCM 2152 / NBRC 15305 / NCIMB 9373 / NCTC 2599 / NRRL B-3711).